The chain runs to 37 residues: Large ribosomal subunit protein bL36 (37 aa).

The protein belongs to the bacterial ribosomal protein bL36 family.

This is Large ribosomal subunit protein bL36 from Maridesulfovibrio salexigens (strain ATCC 14822 / DSM 2638 / NCIMB 8403 / VKM B-1763) (Desulfovibrio salexigens).